The primary structure comprises 807 residues: Anaphase-promoting complex subunit 4 (807 aa).

Y469 carries the post-translational modification Phosphotyrosine. The segment at 755 to 788 (DESSDDEEEAGGKPVKIKEEVLSESETEAHQDAA) is disordered. S757 and S758 each carry phosphoserine. A compositionally biased stretch (basic and acidic residues) spans 770 to 785 (KIKEEVLSESETEAHQ). Residue K772 forms a Glycyl lysine isopeptide (Lys-Gly) (interchain with G-Cter in SUMO2) linkage. S777 and S779 each carry phosphoserine. Residue K797 forms a Glycyl lysine isopeptide (Lys-Gly) (interchain with G-Cter in SUMO2) linkage.

This sequence belongs to the APC4 family. As to quaternary structure, the mammalian APC/C is composed at least of 14 distinct subunits ANAPC1, ANAPC2, CDC27/APC3, ANAPC4, ANAPC5, CDC16/APC6, ANAPC7, CDC23/APC8, ANAPC10, ANAPC11, CDC26/APC12, ANAPC13, ANAPC15 and ANAPC16 that assemble into a complex of at least 19 chains with a combined molecular mass of around 1.2 MDa; APC/C interacts with FZR1 and FBXO5. In the context of the APC/C complex, directly interacts with UBE2S. Interacts with FBXO43.

It is found in the nucleus. Its pathway is protein modification; protein ubiquitination. Functionally, component of the anaphase promoting complex/cyclosome (APC/C), a cell cycle-regulated E3 ubiquitin ligase that controls progression through mitosis and the G1 phase of the cell cycle. The APC/C complex acts by mediating ubiquitination and subsequent degradation of target proteins: it mainly mediates the formation of 'Lys-11'-linked polyubiquitin chains and, to a lower extent, the formation of 'Lys-48'- and 'Lys-63'-linked polyubiquitin chains. The APC/C complex catalyzes assembly of branched 'Lys-11'-/'Lys-48'-linked branched ubiquitin chains on target proteins. This chain is Anaphase-promoting complex subunit 4 (Anapc4), found in Mus musculus (Mouse).